The primary structure comprises 228 residues: MSVYSLPPAPPSDEHQLFQRAQALSGFTLGELATRAQWVIPADLKRVKGWVGMLLEFYLGASAGSKPEQDFADIGIELKTIPISAQGKPLETTFVCVAPLTGNSGVTWESSHVRHKLARVLWVPVEGERHIPLAERRVGAPLLWSPNVEEEELLRRDWEELMDLIVLGKVESITARHGQVLQLRPKAANSRALTEAIGEFGQPIMTLPRGFYLKKTLTAPMLARHFLL.

This sequence belongs to the MutH family.

The protein localises to the cytoplasm. In terms of biological role, sequence-specific endonuclease that cleaves unmethylated GATC sequences. It is involved in DNA mismatch repair. In Yersinia pseudotuberculosis serotype O:1b (strain IP 31758), this protein is DNA mismatch repair protein MutH.